Reading from the N-terminus, the 401-residue chain is MHIKTLTVSQLNRYVKNTLDADFILNNASVKGEISNLKIHSSGHIYFSLKDGGSKINCVMFKSYAYNLKFALENGMDVVALGNVSVYEKEGSYQLYVKDMKREGIGDLYVAFEKLKEKLKEEGLFDDAHKKEIPKFSKKIGVITSPTGAAIKDIINVTKRRNKGIELLIYPALVQGTDASKTLIEGIKTLNKVEDVDIIILARGGGSIEELWAFNNEELAYAVYNSKKPIITGVGHETDFTIIDFVSDRRAPTPSAAAEIAAFDREVLINEILNYKYNIKNSMENIIKEKRNYLNLYKQKIEANSPTNIIANEYRNIDNLKELLNMKIEGKLNKEKNNLSRLSSLLEAHNPLNVLKKGYTLIEDEGNNLITEKEALKELNKINIIFKDGRAKLSIKYIEEF.

Belongs to the XseA family. Heterooligomer composed of large and small subunits.

It is found in the cytoplasm. It catalyses the reaction Exonucleolytic cleavage in either 5'- to 3'- or 3'- to 5'-direction to yield nucleoside 5'-phosphates.. In terms of biological role, bidirectionally degrades single-stranded DNA into large acid-insoluble oligonucleotides, which are then degraded further into small acid-soluble oligonucleotides. In Clostridium botulinum (strain Loch Maree / Type A3), this protein is Exodeoxyribonuclease 7 large subunit.